The primary structure comprises 233 residues: Ribulose-phosphate 3-epimerase (233 aa).

Serine 16 serves as a coordination point for substrate. Positions 41, 43, and 74 each coordinate a divalent metal cation. Aspartate 43 serves as the catalytic Proton acceptor. Substrate is bound by residues histidine 74, 150–153, 185–187, and 207–208; these read GFCG, DGG, and AS. Aspartate 185 is a binding site for a divalent metal cation. Catalysis depends on aspartate 185, which acts as the Proton donor.

Belongs to the ribulose-phosphate 3-epimerase family. A divalent metal cation is required as a cofactor.

It carries out the reaction D-ribulose 5-phosphate = D-xylulose 5-phosphate. It participates in carbohydrate degradation. Functionally, catalyzes the reversible epimerization of D-ribulose 5-phosphate to D-xylulose 5-phosphate. This Chlamydia trachomatis serovar D (strain ATCC VR-885 / DSM 19411 / UW-3/Cx) protein is Ribulose-phosphate 3-epimerase.